Consider the following 77-residue polypeptide: MWHLKLCAVLMIFLLLLGQIDGSPIPEVSSAKRRPRRMTPFWRGVSLRPIGASCRDDSECITRLCRKRRCSLSVAQE.

An N-terminal signal peptide occupies residues 1 to 22 (MWHLKLCAVLMIFLLLLGQIDG). Residues 23–37 (SPIPEVSSAKRRPRR) constitute a propeptide that is removed on maturation. Disulfide bonds link cysteine 54-cysteine 65 and cysteine 60-cysteine 70.

The protein belongs to the LEAP2 family.

It localises to the secreted. Has an antimicrobial activity. This is Liver-expressed antimicrobial peptide 2 (LEAP2) from Homo sapiens (Human).